A 99-amino-acid polypeptide reads, in one-letter code: NADH-quinone oxidoreductase subunit K (99 aa).

3 helical membrane passes run 3–23, 28–48, and 59–79; these read PANY…GVLV, IVVF…LVTF, and IMAF…LAII.

The protein belongs to the complex I subunit 4L family. As to quaternary structure, NDH-1 is composed of 14 different subunits. Subunits NuoA, H, J, K, L, M, N constitute the membrane sector of the complex.

It localises to the cell membrane. The catalysed reaction is a quinone + NADH + 5 H(+)(in) = a quinol + NAD(+) + 4 H(+)(out). Its function is as follows. NDH-1 shuttles electrons from NADH, via FMN and iron-sulfur (Fe-S) centers, to quinones in the respiratory chain. The immediate electron acceptor for the enzyme in this species is believed to be a menaquinone. Couples the redox reaction to proton translocation (for every two electrons transferred, four hydrogen ions are translocated across the cytoplasmic membrane), and thus conserves the redox energy in a proton gradient. The protein is NADH-quinone oxidoreductase subunit K of Frankia casuarinae (strain DSM 45818 / CECT 9043 / HFP020203 / CcI3).